The primary structure comprises 552 residues: 5'-AMP-activated protein kinase catalytic subunit alpha-2 (552 aa).

The Protein kinase domain maps to 16 to 268; sequence YVLGDTLGVG…IKDIREHEWF (253 aa). Residues 22–30 and Lys-45 contribute to the ATP site; that span reads LGVGTFGKV. Catalysis depends on Asp-139, which acts as the Proton acceptor. Thr-172 is modified (phosphothreonine; by LKB1 and CaMKK2). Thr-258 carries the post-translational modification Phosphothreonine. Positions 291 to 376 are AIS; that stretch reads EAVKEVCEKF…PERMPPLIAD (86 aa). Ser-377 is subject to Phosphoserine. The tract at residues 477–521 is disordered; that stretch reads VEQRSGSSTPQRSCSAAGLHRPRSSFDSTTAESHSLSGSLTGSLT. Residues 480-490 are compositionally biased toward polar residues; the sequence is RSGSSTPQRSC. Ser-491 is modified (phosphoserine). A compositionally biased stretch (polar residues) spans 501–510; that stretch reads SFDSTTAESH. The span at 511–521 shows a compositional bias: low complexity; it reads SLSGSLTGSLT.

The protein belongs to the protein kinase superfamily. CAMK Ser/Thr protein kinase family. SNF1 subfamily. In terms of assembly, AMPK is a heterotrimer of an alpha catalytic subunit (PRKAA1 or PRKAA2), a beta (PRKAB1 or PRKAB2) and a gamma non-catalytic subunits (PRKAG1, PRKAG2 or PRKAG3). Interacts with FNIP1 and FNIP2. Associates with internalized insulin receptor/INSR complexes on Golgi/endosomal membranes; PRKAA2/AMPK2 together with ATIC and HACD3/PTPLAD1 is proposed to be part of a signaling network regulating INSR autophosphorylation and endocytosis. Interacts with ARF6. The phosphorylated form at Thr-172 mediated by CamKK2 interacts with ACSS2. Mg(2+) is required as a cofactor. In terms of processing, ubiquitinated. Phosphorylated at Thr-172 by STK11/LKB1 in complex with STE20-related adapter-alpha (STRADA) pseudo kinase and CAB39. Also phosphorylated at Thr-172 by CAMKK2; triggered by a rise in intracellular calcium ions, without detectable changes in the AMP/ATP ratio. CAMKK1 can also phosphorylate Thr-172, but at much lower level. Dephosphorylated by protein phosphatase 2A and 2C (PP2A and PP2C). Phosphorylated by ULK1; leading to negatively regulate AMPK activity and suggesting the existence of a regulatory feedback loop between ULK1 and AMPK. Dephosphorylated by PPM1A and PPM1B at Thr-172 (mediated by STK11/LKB1).

It is found in the cytoplasm. The protein resides in the nucleus. It catalyses the reaction L-seryl-[protein] + ATP = O-phospho-L-seryl-[protein] + ADP + H(+). The catalysed reaction is L-threonyl-[protein] + ATP = O-phospho-L-threonyl-[protein] + ADP + H(+). It carries out the reaction L-seryl-[acetyl-CoA carboxylase] + ATP = O-phospho-L-seryl-[acetyl-CoA carboxylase] + ADP + H(+). The enzyme catalyses L-seryl-[3-hydroxy-3-methylglutaryl-coenzyme A reductase] + ATP = O-phospho-L-seryl-[3-hydroxy-3-methylglutaryl-coenzyme A reductase] + ADP + H(+). Activated by phosphorylation on Thr-172. Binding of AMP to non-catalytic gamma subunit (PRKAG1, PRKAG2 or PRKAG3) results in allosteric activation, inducing phosphorylation on Thr-172. AMP-binding to gamma subunit also sustains activity by preventing dephosphorylation of Thr-172. ADP also stimulates Thr-172 phosphorylation, without stimulating already phosphorylated AMPK. ATP promotes dephosphorylation of Thr-172, rendering the enzyme inactive. Under physiological conditions AMPK mainly exists in its inactive form in complex with ATP, which is much more abundant than AMP. AMPK is activated by antihyperglycemic drug metformin, a drug prescribed to patients with type 2 diabetes: in vivo, metformin seems to mainly inhibit liver gluconeogenesis. However, metformin can be used to activate AMPK in muscle and other cells in culture or ex vivo. Selectively inhibited by compound C (6-[4-(2-Piperidin-1-yl-ethoxy)-phenyl)]-3-pyridin-4-yl-pyyrazolo[1,5-a] pyrimidine. Activated by resveratrol, a natural polyphenol present in red wine, and S17834, a synthetic polyphenol. Salicylate/aspirin directly activates kinase activity, primarily by inhibiting Thr-172 dephosphorylation. Functionally, catalytic subunit of AMP-activated protein kinase (AMPK), an energy sensor protein kinase that plays a key role in regulating cellular energy metabolism. In response to reduction of intracellular ATP levels, AMPK activates energy-producing pathways and inhibits energy-consuming processes: inhibits protein, carbohydrate and lipid biosynthesis, as well as cell growth and proliferation. AMPK acts via direct phosphorylation of metabolic enzymes, and by longer-term effects via phosphorylation of transcription regulators. Regulates lipid synthesis by phosphorylating and inactivating lipid metabolic enzymes such as ACACA, ACACB, GYS1, HMGCR and LIPE; regulates fatty acid and cholesterol synthesis by phosphorylating acetyl-CoA carboxylase (ACACA and ACACB) and hormone-sensitive lipase (LIPE) enzymes, respectively. Promotes lipolysis of lipid droplets by mediating phosphorylation of isoform 1 of CHKA (CHKalpha2). Regulates insulin-signaling and glycolysis by phosphorylating IRS1, PFKFB2 and PFKFB3. Involved in insulin receptor/INSR internalization. AMPK stimulates glucose uptake in muscle by increasing the translocation of the glucose transporter SLC2A4/GLUT4 to the plasma membrane, possibly by mediating phosphorylation of TBC1D4/AS160. Regulates transcription and chromatin structure by phosphorylating transcription regulators involved in energy metabolism such as CRTC2/TORC2, FOXO3, histone H2B, HDAC5, MEF2C, MLXIPL/ChREBP, EP300, HNF4A, p53/TP53, SREBF1, SREBF2 and PPARGC1A. Acts as a key regulator of glucose homeostasis in liver by phosphorylating CRTC2/TORC2, leading to CRTC2/TORC2 sequestration in the cytoplasm. In response to stress, phosphorylates 'Ser-36' of histone H2B (H2BS36ph), leading to promote transcription. Acts as a key regulator of cell growth and proliferation by phosphorylating FNIP1, TSC2, RPTOR, WDR24 and ATG1/ULK1: in response to nutrient limitation, negatively regulates the mTORC1 complex by phosphorylating RPTOR component of the mTORC1 complex and by phosphorylating and activating TSC2. Also phosphorylates and inhibits GATOR2 subunit WDR24 in response to nutrient limitation, leading to suppress glucose-mediated mTORC1 activation. In response to energetic stress, phosphorylates FNIP1, inactivating the non-canonical mTORC1 signaling, thereby promoting nuclear translocation of TFEB and TFE3, and inducing transcription of lysosomal or autophagy genes. In response to nutrient limitation, promotes autophagy by phosphorylating and activating ATG1/ULK1. In that process, it also activates WDR45/WIPI4. Phosphorylates CASP6, thereby preventing its autoprocessing and subsequent activation. AMPK also acts as a regulator of circadian rhythm by mediating phosphorylation of CRY1, leading to destabilize it. May regulate the Wnt signaling pathway by phosphorylating CTNNB1, leading to stabilize it. Also acts as a regulator of cellular polarity by remodeling the actin cytoskeleton; probably by indirectly activating myosin. Also phosphorylates CFTR, EEF2K, KLC1, NOS3 and SLC12A1. Plays an important role in the differential regulation of pro-autophagy (composed of PIK3C3, BECN1, PIK3R4 and UVRAG or ATG14) and non-autophagy (composed of PIK3C3, BECN1 and PIK3R4) complexes, in response to glucose starvation. Can inhibit the non-autophagy complex by phosphorylating PIK3C3 and can activate the pro-autophagy complex by phosphorylating BECN1. Upon glucose starvation, promotes ARF6 activation in a kinase-independent manner leading to cell migration. Upon glucose deprivation mediates the phosphorylation of ACSS2 at 'Ser-659', which exposes the nuclear localization signal of ACSS2, required for its interaction with KPNA1 and nuclear translocation. Upon stress, regulates mitochondrial fragmentation through phosphorylation of MTFR1L. The protein is 5'-AMP-activated protein kinase catalytic subunit alpha-2 of Homo sapiens (Human).